The following is a 61-amino-acid chain: Small ribosomal subunit protein uS14 (61 aa).

Zn(2+) contacts are provided by cysteine 24, cysteine 27, cysteine 40, and cysteine 43.

Belongs to the universal ribosomal protein uS14 family. Zinc-binding uS14 subfamily. Part of the 30S ribosomal subunit. Contacts proteins S3 and S10. Requires Zn(2+) as cofactor.

Its function is as follows. Binds 16S rRNA, required for the assembly of 30S particles and may also be responsible for determining the conformation of the 16S rRNA at the A site. The sequence is that of Small ribosomal subunit protein uS14 from Spiroplasma citri.